The primary structure comprises 392 residues: Tryptophan synthase beta chain (392 aa).

N6-(pyridoxal phosphate)lysine is present on lysine 86.

Belongs to the TrpB family. Tetramer of two alpha and two beta chains. Requires pyridoxal 5'-phosphate as cofactor.

The catalysed reaction is (1S,2R)-1-C-(indol-3-yl)glycerol 3-phosphate + L-serine = D-glyceraldehyde 3-phosphate + L-tryptophan + H2O. It participates in amino-acid biosynthesis; L-tryptophan biosynthesis; L-tryptophan from chorismate: step 5/5. Its function is as follows. The beta subunit is responsible for the synthesis of L-tryptophan from indole and L-serine. This chain is Tryptophan synthase beta chain, found in Methanocorpusculum labreanum (strain ATCC 43576 / DSM 4855 / Z).